Consider the following 75-residue polypeptide: Small ribosomal subunit protein bS18 (75 aa).

The protein belongs to the bacterial ribosomal protein bS18 family. In terms of assembly, part of the 30S ribosomal subunit. Forms a tight heterodimer with protein bS6.

Functionally, binds as a heterodimer with protein bS6 to the central domain of the 16S rRNA, where it helps stabilize the platform of the 30S subunit. The sequence is that of Small ribosomal subunit protein bS18 from Shewanella baltica (strain OS223).